The sequence spans 1013 residues: EF-hand calcium-binding domain-containing protein 6 (1013 aa).

5 EF-hand domains span residues 20-55, 145-180, 251-286, 287-322, and 352-387; these read KNIK…FCLK, KSYE…FIYQ, DRSA…VAIK, LSDS…NCRM, and RNLQ…FCPF. Residues 441–460 are disordered; it reads QKDEQQQPDLSERTKPTEDK. 6 EF-hand domains span residues 482–517, 589–624, 695–730, 731–766, 812–847, and 917–952; these read QQDP…TGMP, ESFR…LLLN, NRWS…FDIP, LTPR…NYSP, DLHQ…CGCS, and SSQL…FCYK. Ca(2+)-binding residues include D602, D604, D606, and D613. A Phosphothreonine modification is found at T732.

In terms of assembly, microtubule inner protein component of sperm flagellar doublet microtubules. Binds PARK7. Part of a ternary complex containing PARK7, EFCAB6/DJBP and AR.

The protein localises to the nucleus. Its subcellular location is the cytoplasm. The protein resides in the cytoskeleton. It is found in the flagellum axoneme. In terms of biological role, negatively regulates the androgen receptor by recruiting histone deacetylase complex, and protein DJ-1 antagonizes this inhibition by abrogation of this complex. Microtubule inner protein (MIP) part of the dynein-decorated doublet microtubules (DMTs) in cilia axoneme, which is required for motile cilia beating. This is EF-hand calcium-binding domain-containing protein 6 (EFCAB6) from Pongo abelii (Sumatran orangutan).